A 261-amino-acid chain; its full sequence is Pantothenate synthetase (261 aa).

29–36 (MGALHNGH) is a binding site for ATP. His36 functions as the Proton donor in the catalytic mechanism. Gln60 lines the (R)-pantoate pocket. Residue Gln60 coordinates beta-alanine. 147 to 150 (GEKD) provides a ligand contact to ATP. Gln153 is a binding site for (R)-pantoate. ATP is bound at residue 184–187 (LSSR).

Belongs to the pantothenate synthetase family. In terms of assembly, homodimer.

It localises to the cytoplasm. The enzyme catalyses (R)-pantoate + beta-alanine + ATP = (R)-pantothenate + AMP + diphosphate + H(+). Its pathway is cofactor biosynthesis; (R)-pantothenate biosynthesis; (R)-pantothenate from (R)-pantoate and beta-alanine: step 1/1. Catalyzes the condensation of pantoate with beta-alanine in an ATP-dependent reaction via a pantoyl-adenylate intermediate. In Francisella tularensis subsp. holarctica (strain FTNF002-00 / FTA), this protein is Pantothenate synthetase.